The following is a 454-amino-acid chain: Bifunctional protein GlmU (454 aa).

Residues 1 to 228 (MTLPLHVVIL…PQDVEGANDP (228 aa)) are pyrophosphorylase. UDP-N-acetyl-alpha-D-glucosamine contacts are provided by residues 10–13 (LAAG), K24, Q76, 81–82 (GT), 103–105 (YGD), G138, E153, N168, and N226. D105 contributes to the Mg(2+) binding site. Mg(2+) is bound at residue N226. The linker stretch occupies residues 229–249 (WQLAQLERAWQLRAARALSLQ). The tract at residues 250-454 (GVRMADPARV…IEGWERPTKK (205 aa)) is N-acetyltransferase. UDP-N-acetyl-alpha-D-glucosamine-binding residues include R332 and K350. H362 serves as the catalytic Proton acceptor. Positions 365 and 376 each coordinate UDP-N-acetyl-alpha-D-glucosamine. Acetyl-CoA-binding positions include A379, 385–386 (NY), S404, A422, and R439.

In the N-terminal section; belongs to the N-acetylglucosamine-1-phosphate uridyltransferase family. It in the C-terminal section; belongs to the transferase hexapeptide repeat family. As to quaternary structure, homotrimer. Mg(2+) is required as a cofactor.

The protein localises to the cytoplasm. The enzyme catalyses alpha-D-glucosamine 1-phosphate + acetyl-CoA = N-acetyl-alpha-D-glucosamine 1-phosphate + CoA + H(+). It catalyses the reaction N-acetyl-alpha-D-glucosamine 1-phosphate + UTP + H(+) = UDP-N-acetyl-alpha-D-glucosamine + diphosphate. Its pathway is nucleotide-sugar biosynthesis; UDP-N-acetyl-alpha-D-glucosamine biosynthesis; N-acetyl-alpha-D-glucosamine 1-phosphate from alpha-D-glucosamine 6-phosphate (route II): step 2/2. It participates in nucleotide-sugar biosynthesis; UDP-N-acetyl-alpha-D-glucosamine biosynthesis; UDP-N-acetyl-alpha-D-glucosamine from N-acetyl-alpha-D-glucosamine 1-phosphate: step 1/1. It functions in the pathway bacterial outer membrane biogenesis; LPS lipid A biosynthesis. Functionally, catalyzes the last two sequential reactions in the de novo biosynthetic pathway for UDP-N-acetylglucosamine (UDP-GlcNAc). The C-terminal domain catalyzes the transfer of acetyl group from acetyl coenzyme A to glucosamine-1-phosphate (GlcN-1-P) to produce N-acetylglucosamine-1-phosphate (GlcNAc-1-P), which is converted into UDP-GlcNAc by the transfer of uridine 5-monophosphate (from uridine 5-triphosphate), a reaction catalyzed by the N-terminal domain. This Xanthomonas oryzae pv. oryzae (strain MAFF 311018) protein is Bifunctional protein GlmU.